The following is a 185-amino-acid chain: Elongation factor P (185 aa).

Belongs to the elongation factor P family.

Its subcellular location is the cytoplasm. Its pathway is protein biosynthesis; polypeptide chain elongation. Involved in peptide bond synthesis. Stimulates efficient translation and peptide-bond synthesis on native or reconstituted 70S ribosomes in vitro. Probably functions indirectly by altering the affinity of the ribosome for aminoacyl-tRNA, thus increasing their reactivity as acceptors for peptidyl transferase. In Salinispora tropica (strain ATCC BAA-916 / DSM 44818 / JCM 13857 / NBRC 105044 / CNB-440), this protein is Elongation factor P.